A 155-amino-acid chain; its full sequence is Ribosomal RNA large subunit methyltransferase H (155 aa).

Residues Leu-72, Gly-103, and 122 to 127 (LSALTL) contribute to the S-adenosyl-L-methionine site.

Belongs to the RNA methyltransferase RlmH family. In terms of assembly, homodimer.

The protein resides in the cytoplasm. It catalyses the reaction pseudouridine(1915) in 23S rRNA + S-adenosyl-L-methionine = N(3)-methylpseudouridine(1915) in 23S rRNA + S-adenosyl-L-homocysteine + H(+). Its function is as follows. Specifically methylates the pseudouridine at position 1915 (m3Psi1915) in 23S rRNA. The chain is Ribosomal RNA large subunit methyltransferase H from Citrobacter koseri (strain ATCC BAA-895 / CDC 4225-83 / SGSC4696).